The primary structure comprises 201 residues: Ras-related protein Rab-9B (201 aa).

Residues V18, G19, K20, S21, S22, D33, S34, A36, H38, and T39 each contribute to the GTP site. S21 contributes to the Mg(2+) binding site. A Switch 1 motif is present at residues 31–42 (KFDSQAFHTIGV). S34 carries the post-translational modification Phosphoserine. 2 residues coordinate Mg(2+): T39 and D62. The Switch 2 motif lies at 64–78 (AGQERFKSLRTPFYR). Residues G65, N124, K125, A155, and K156 each coordinate GTP. Residues C200 and C201 are each lipidated (S-geranylgeranyl cysteine).

Belongs to the small GTPase superfamily. Rab family. As to quaternary structure, interacts (GTP-bound form) with SGSM1; the GDP-bound form has much lower affinity for SGSM1. The GTP-bound form but not the GDP-bound form interacts with HPS4 and the BLOC-3 complex (heterodimer of HPS1 and HPS4) but does not interact with HPS1 alone. Interacts (GTP-bound form) with NDE1. Mg(2+) is required as a cofactor.

It localises to the cell membrane. It is found in the cytoplasmic vesicle. Its subcellular location is the phagosome membrane. The enzyme catalyses GTP + H2O = GDP + phosphate + H(+). Its activity is regulated as follows. Regulated by guanine nucleotide exchange factors (GEFs) which promote the exchange of bound GDP for free GTP. Regulated by GTPase activating proteins (GAPs) which increase the GTP hydrolysis activity. Inhibited by GDP dissociation inhibitors (GDIs). The small GTPases Rab are key regulators of intracellular membrane trafficking, from the formation of transport vesicles to their fusion with membranes. Rabs cycle between an inactive GDP-bound form and an active GTP-bound form that is able to recruit to membranes different sets of downstream effectors directly responsible for vesicle formation, movement, tethering and fusion. RAB9B is involved in the transport of proteins between the endosomes and the trans Golgi network. May use NDE1/NDEL1 as an effector to interact with the dynein motor complex in order to control retrograde trafficking of RAB9-associated late endosomes to the TGN. This Pongo abelii (Sumatran orangutan) protein is Ras-related protein Rab-9B (RAB9B).